The chain runs to 299 residues: Putative peptidyl-prolyl cis-trans isomerase jhp_0161 (299 aa).

Residues 1 to 21 form the signal peptide; sequence MKKNILNLALVGALSASFLMA. The PpiC domain occupies 154-253; sequence KQEAHARHIL…FGYHIIYLIS (100 aa).

The catalysed reaction is [protein]-peptidylproline (omega=180) = [protein]-peptidylproline (omega=0). The protein is Putative peptidyl-prolyl cis-trans isomerase jhp_0161 of Helicobacter pylori (strain J99 / ATCC 700824) (Campylobacter pylori J99).